The sequence spans 660 residues: MSAIESVLHERRQFAPPAAVEKAAAISGMAAYRALAEEAERDYEGFWARLARETLEWRKPFGKALDETNAPFYKWFDDGELNASYNCLDRHVAAGLGERIAVIFEADDGTVARVTYADLLARVSRFANALKKRGIGRGDRVVIYIPMSVEGIVAMQACARIGATHSVVFGGFSSKSLHERIVDVGATALVTADEQMRGGKTLPLKSIADEALAMGGCDAVKTVVVYRRTGGNVDWHAGRDVWMHEIVANESDACEPEWVGAEHPLFILYTSGSTGKPKGVQHSTAGYLLWVAQTMKWTFDWKPDDVFWCTADIGWVTGHSYITYGPLAVGATQVVFEGVPTYPNAGRFWKMIGDHKVSVFYTAPTAIRSLIKAAEADEHVHPKSYDLSSLRIIGTVGEPINPEAWIWYHKNVGQERCPIVDTWWQTETGGHMITPLPGATPTVPGSCTLPLPGIMAAVVDETGQDVPNGQGGILVVKRPWPAMARTIWGDPERFKKSYFPDELGGRLYLAGDGTVRDKETGYFTIMGRIDDVLNVSGHRLGTMEIESALVSHELVAEAAVVGRPDDTTGEAVVAFVVLKRSRPEGEEAAALAKTLRDWVGKEIGPIAKPKDIRFGDNLPKTRSGKIMRRLLRSLAKGEAITQDTSTLENPAILEQLAEVR.

CoA-binding positions include 197–200 and T317; that span reads RGGK. ATP contacts are provided by residues 397 to 399, 421 to 426, D512, and R528; these read GEP and DTWWQT. Position 536 (S536) interacts with CoA. Residue R539 participates in ATP binding. The Mg(2+) site is built by V550, H552, and V555. Position 625 is an N6-acetyllysine (K625).

This sequence belongs to the ATP-dependent AMP-binding enzyme family. Mg(2+) serves as cofactor. Post-translationally, acetylated. Deacetylation by the SIR2-homolog deacetylase activates the enzyme.

The enzyme catalyses acetate + ATP + CoA = acetyl-CoA + AMP + diphosphate. Its function is as follows. Catalyzes the conversion of acetate into acetyl-CoA (AcCoA), an essential intermediate at the junction of anabolic and catabolic pathways. AcsA undergoes a two-step reaction. In the first half reaction, AcsA combines acetate with ATP to form acetyl-adenylate (AcAMP) intermediate. In the second half reaction, it can then transfer the acetyl group from AcAMP to the sulfhydryl group of CoA, forming the product AcCoA. This chain is Acetyl-coenzyme A synthetase, found in Burkholderia thailandensis (strain ATCC 700388 / DSM 13276 / CCUG 48851 / CIP 106301 / E264).